A 260-amino-acid chain; its full sequence is Protein TONNEAU 1a (260 aa).

The 33-residue stretch at 73-105 folds into the LisH domain; the sequence is SGRLLSALICEYLDWAQLNHTLIVYQPESNLPK. 2 disordered regions span residues 147 to 224 and 236 to 260; these read TQGM…EEVT and DRKT…EGRD. Residues 161-175 show a composition bias toward low complexity; that stretch reads ESSSSLESRNPPRRS. Residues 248–260 show a composition bias toward basic and acidic residues; sequence NVRDGTNEEEGRD.

As to quaternary structure, interacts with CEN1, LNG1/TRM2 and LNG2/TRM1 (via C-terminus).

The protein resides in the cytoplasm. It is found in the cytoskeleton. Functionally, involved in the control of the dynamic organization of the cortical cytoskeleton. May play a role in the organization of microtubule arrays at the centrosome through interaction with centrin 1 (CEN1). This chain is Protein TONNEAU 1a (TON1A), found in Arabidopsis thaliana (Mouse-ear cress).